We begin with the raw amino-acid sequence, 3323 residues long: Mucin-3A (3323 aa).

Residues 1–15 (MQLLGLLGLLWMLKA) form the signal peptide. Disordered regions lie at residues 218-243 (TISSTTRTTERTPLPTGSIHTTTSPT), 270-289 (TSMTTTASQPTATNTLSSPT), 325-345 (ISRSTPTSETTYTTSPTSTVT), 359-380 (GTLSTETSLPPTSSSLPTTETA), 539-677 (MSAS…PSTE), 700-722 (NASSMTTSETTYPNSPTGPGTNS), 734-756 (ETSSTATSLPPTSPLVSTAKTAK), 909-991 (SFSS…TLTP), 1170-1201 (ISSASPTSGTMVTSTTMTPSSLSTDTPSTTPT), 1318-1356 (AESALAPTTTTSFTTSPTMEPPSTTVATTGTGQTTFPSS), 1380-1442 (AMTS…TNPV), 1484-1509 (TMTETSSTATSLPPTSSLVSTAETAK), 1714-1746 (TPSSTVATTGTGQTTFTSSTATSPKTTTLTPTS), 1793-1844 (FTSS…YPTS), and 1900-2056 (TSHS…SHST). A compositionally biased stretch (low complexity) spans 270–284 (TSMTTTASQPTATNT). Over residues 545 to 563 (GTTHTESISSPPASTSTLH) the composition is skewed to polar residues. Low complexity predominate over residues 564–618 (TTAESTLAPTTTTSFTTSTTMEPPSTTAATTGTGQTTFTSSTATFPETTTPTPTT). The span at 619-629 (DMSTESLTTAM) shows a compositional bias: polar residues. Positions 630 to 676 (TSPPITSSVTSTNTVTSMTTTTSPPTTTNSFTSLTSMPLSSTPVPST) are enriched in low complexity. A compositionally biased stretch (polar residues) spans 700 to 721 (NASSMTTSETTYPNSPTGPGTN). Positions 909–918 (SFSSSMSESS) are enriched in low complexity. Polar residues predominate over residues 919–932 (AGTTHTESISSPRG). The segment covering 933–991 (TTSTLHTTVESTPSPTTTTSFTTSTMMEPPSSTVSTTGRGQTTFPSSTATFPETTTLTP) has biased composition (low complexity). Positions 1324–1356 (PTTTTSFTTSPTMEPPSTTVATTGTGQTTFPSS) are enriched in low complexity. A run of 32 repeats spans residues 1893–1910 (VTTTTKITSHSTPSFTSS), 1911–1927 (IATTETPSHSTPRFTSS), 1928–1944 (ITTTETPSHSTPRFTSS), 1945–1961 (ITNTKTTSHSSPSFTSS), 1962–1978 (ITTTETTSHNTPSLTSS), 1979–1995 (ITTTKTTSHSTPSYTSL), 1996–2012 (ITTTTTTSHSTPSFTSS), 2013–2029 (ITTTETTSHNTPSLTSS), 2030–2046 (ITTTETTSHSTPSFTSS), 2047–2062 (ITTETTSHSTPSFTSL), 2063–2079 (ITITEITSHSTLSYTTS), 2080–2096 (ITTTETPSHSTLSFTSS), 2097–2113 (ITTTETTSHSTPSFTSS), 2114–2130 (ITTSEMPSHSTPSFTSS), 2131–2147 (ITTTENATHSTPNFTSS), 2148–2164 (ITTTETTSHSTPSFTSL), 2165–2191 (ITTTETTSHRWGTTETTSYSTPSFTSS), 2192–2208 (NTITETTSHSTPSYITS), 2209–2225 (ITTTETPSSSTPSFSSS), 2226–2242 (ITTTETTSHSTPGFTSS), 2243–2259 (ITTTETTSHSTPSFTSS), 2260–2276 (ITTTETTSHDTPSFTSS), 2277–2293 (ITTSETPSHSTPSSTSL), 2294–2310 (ITTTKTTSHSTPSFTSS), 2311–2327 (ITTTETTSHSAHSFTSS), 2328–2344 (ITTTETTSHNTRSFTSS), 2345–2361 (ITTTETNSHSTTSFTSS), 2362–2378 (ITTTETTSHSTPSFSSS), 2379–2395 (ITTTETPLHSTPGLTSW), 2396–2412 (VTTTKTTSHITPGLTSS), 2413–2429 (ITTTETTSHSTPGFTSS), and 2430–2446 (ITTTETTSESTPSLSSS). A 32 X approximate tandem repeats, Ser/Thr-rich region spans residues 1893-2446 (VTTTTKITSH…SESTPSLSSS (554 aa)). Polar residues predominate over residues 1907-1947 (FTSSIATTETPSHSTPRFTSSITTTETPSHSTPRFTSSITN). The segment covering 1948 to 2056 (TKTTSHSSPS…ITTETTSHST (109 aa)) has biased composition (low complexity). Low complexity-rich tracts occupy residues 2100-2170 (TETT…TTET), 2177-2384 (TTET…TTET), 2393-2447 (TSWV…SSST), and 2464-2507 (TTSE…TTTT). 6 disordered regions span residues 2100 to 2447 (TETT…SSST), 2464 to 2508 (TTSE…TTTD), 2578 to 2608 (TQTPPVLTSATGTQTSPAPTTVTFGSTDSST), 2631 to 2656 (IPSTHSSTLQTTPSTPSLQTSLTSTS), 2834 to 2858 (MMPESESSISPNASSSTGTGTVPTN), and 2897 to 2937 (SSLP…TSRR). Over residues 2578 to 2602 (TQTPPVLTSATGTQTSPAPTTVTFG) the composition is skewed to polar residues. 3 stretches are compositionally biased toward low complexity: residues 2633–2656 (STHSSTLQTTPSTPSLQTSLTSTS), 2834–2849 (MMPESESSISPNASSS), and 2905–2937 (TSSKSTHPSPPTTRTSETPVATTQTPTTLTSRR). The EGF-like domain occupies 2976-3009 (SGDRCQLQTRCQNGGQWDGLKCQCPSTFYGSSCE). 2 disulfides stabilise this stretch: Cys-2980/Cys-2986 and Cys-2999/Cys-3008. In terms of domain architecture, SEA spans 3018–3143 (DVVETEVGME…DSIKVNNNSK (126 aa)). The chain crosses the membrane as a helical span at residues 3227-3247 (LVGGLTAGAALLVLLLLALGV).

Highly O-glycosylated and probably also N-glycosylated. In terms of tissue distribution, broad specificity; small intestine, colon, colonic tumors, heart, liver, thymus, prostate, pancreas and gall bladder.

It is found in the membrane. Its subcellular location is the secreted. Major glycoprotein component of a variety of mucus gels. Thought to provide a protective, lubricating barrier against particles and infectious agents at mucosal surfaces. May be involved in ligand binding and intracellular signaling. The chain is Mucin-3A from Homo sapiens (Human).